We begin with the raw amino-acid sequence, 382 residues long: ADP,ATP carrier protein, mitochondrial (382 aa).

The transit peptide at 1-71 (MAEQANQPTV…PMMSSSPIFA (71 aa)) directs the protein to the mitochondrion. 3 Solcar repeats span residues 80 to 173 (KNFM…FKRL), 185 to 277 (KWFG…LKPV), and 285 to 371 (DNFF…LQIL). The next 5 helical transmembrane spans lie at 82 to 109 (FMID…VKLL), 150 to 174 (TANV…KRLF), 183 to 203 (YWKW…SSLF), 253 to 274 (FNIS…YDSL), and 288 to 308 (FASF…SYPI). Positions 155 and 167 each coordinate ADP. Arg312 provides a ligand contact to ADP. An important for transport activity region spans residues 312 to 317 (RRRMMM). A Nucleotide carrier signature motif motif is present at residues 312–317 (RRRMMM). The helical transmembrane segment at 348–368 (AGANILRAIAGAGVLSGYDQL) threads the bilayer.

This sequence belongs to the mitochondrial carrier (TC 2.A.29) family. As to quaternary structure, monomer.

It localises to the mitochondrion inner membrane. It carries out the reaction ADP(in) + ATP(out) = ADP(out) + ATP(in). With respect to regulation, the matrix-open state (m-state) is inhibited by the membrane-permeable bongkrekic acid (BKA). The cytoplasmic-open state (c-state) is inhibited by the membrane-impermeable toxic inhibitor carboxyatractyloside (CATR). Functionally, ADP:ATP antiporter that mediates import of ADP into the mitochondrial matrix for ATP synthesis, and export of ATP out to fuel the cell. Cycles between the cytoplasmic-open state (c-state) and the matrix-open state (m-state): operates by the alternating access mechanism with a single substrate-binding site intermittently exposed to either the cytosolic (c-state) or matrix (m-state) side of the inner mitochondrial membrane. The protein is ADP,ATP carrier protein, mitochondrial of Oryza sativa subsp. japonica (Rice).